Here is a 286-residue protein sequence, read N- to C-terminus: MRLIIVSGRSGSGKSTALNVLEDNGFYCIDNLPASLLPDLAQRALLHTELLQPQVAVSIDARNLPSQLQRFPELLQEVRDNHINCDVLYLDADDETLLKRFSETRRRHPLTTDTRSLAEAIGDESQLLGPIADLADLKLDTTSLNLYQLRDTIKLRLLNKPEPGTAFLVESFGFKRGMPVDADLVFDVRCLPNPYWKPELRDHSGLEPEVREYLAAQPDVEEMYQDIVGYLNKWLPRFAASNRSYVTVAIGCTGGHHRSVYLAERIGAALRDSLKNVQIRHRDLSS.

8 to 15 (GRSGSGKS) lines the ATP pocket. 60-63 (DARN) lines the GTP pocket.

Belongs to the RapZ-like family.

Its function is as follows. Displays ATPase and GTPase activities. This Pseudomonas aeruginosa (strain LESB58) protein is Nucleotide-binding protein PLES_48441.